The primary structure comprises 338 residues: Lipopolysaccharide 1,2-glucosyltransferase (338 aa).

UDP is bound by residues 33–38 (GVDANY) and 130–131 (DA). 2 residues coordinate Mg(2+): Asp130 and Asp132. Short sequence motifs (DXD) lie at residues 130–132 (DAD) and 215–217 (DQD). His264 is a Mg(2+) binding site. A UDP-binding site is contributed by 264–270 (HYTGATK).

It belongs to the glycosyltransferase 8 family. The cofactor is Mg(2+).

The protein resides in the cell inner membrane. The catalysed reaction is UDP-glucose + [lipopolysaccharide] = UDP + D-glucosyl-[lipopolysaccharide].. It carries out the reaction alpha-D-Glc-(1-&gt;3)-[alpha-D-Gal-(1-&gt;6)]-alpha-D-Glc-(1-&gt;3)-[L-alpha-D-Hep-(1-&gt;7)]-4-O-PO3(2-)-L-alpha-D-Hep-(1-&gt;3)-4-O-PO3(2-)-L-alpha-D-Hep-(1-&gt;5)-[alpha-Kdo-(2-&gt;4)]-alpha-Kdo-(2-&gt;6)-lipid A + UDP-alpha-D-glucose = alpha-D-Glc-(1-&gt;2)-alpha-D-Glc-(1-&gt;3)-[alpha-D-Gal-(1-&gt;6)]-alpha-D-Glc-(1-&gt;3)-[L-alpha-D-Hep-(1-&gt;7)]-4-O-PO3(2-)-L-alpha-D-Hep-(1-&gt;3)-4-O-PO3(2-)-L-alpha-D-Hep-(1-&gt;5)-[alpha-Kdo-(2-&gt;4)]-alpha-Kdo-(2-&gt;6)-lipid A + UDP + H(+). It participates in bacterial outer membrane biogenesis; LPS core biosynthesis. Functionally, glucosyltransferase involved in the biosynthesis of the core oligosaccharide region of lipopolysaccharide (LPS). Catalyzes the addition of a glucose (glucose III) to the outer-core glucose II. This chain is Lipopolysaccharide 1,2-glucosyltransferase, found in Escherichia coli (strain K12).